An 84-amino-acid chain; its full sequence is Small ribosomal subunit protein uS17 (84 aa).

The protein belongs to the universal ribosomal protein uS17 family. Part of the 30S ribosomal subunit.

Functionally, one of the primary rRNA binding proteins, it binds specifically to the 5'-end of 16S ribosomal RNA. This is Small ribosomal subunit protein uS17 from Clostridium botulinum (strain Eklund 17B / Type B).